Reading from the N-terminus, the 83-residue chain is Apolipoprotein C-I, basic form (83 aa).

The N-terminal stretch at 1-26 (MRLFLSLPVLVVVLSMVLEGPAPVQG) is a signal peptide.

Belongs to the apolipoprotein C1 family.

The protein resides in the secreted. Functionally, inhibitor of lipoprotein binding to the low density lipoprotein (LDL) receptor, LDL receptor-related protein, and very low density lipoprotein (VLDL) receptor. Associates with high density lipoproteins (HDL) and the triacylglycerol-rich lipoproteins in the plasma and makes up about 10% of the protein of the VLDL and 2% of that of HDL. Appears to interfere directly with fatty acid uptake and is also the major plasma inhibitor of cholesteryl ester transfer protein (CETP). Binds free fatty acids and reduces their intracellular esterification. Modulates the interaction of APOE with beta-migrating VLDL and inhibits binding of beta-VLDL to the LDL receptor-related protein. In Papio anubis (Olive baboon), this protein is Apolipoprotein C-I, basic form (APOC1).